The primary structure comprises 73 residues: Small ribosomal subunit protein bS18 (73 aa).

This sequence belongs to the bacterial ribosomal protein bS18 family. As to quaternary structure, part of the 30S ribosomal subunit. Forms a tight heterodimer with protein bS6.

In terms of biological role, binds as a heterodimer with protein bS6 to the central domain of the 16S rRNA, where it helps stabilize the platform of the 30S subunit. This is Small ribosomal subunit protein bS18 from Synechococcus sp. (strain WH7803).